Consider the following 92-residue polypeptide: Small ribosomal subunit protein uS17 (92 aa).

It belongs to the universal ribosomal protein uS17 family. In terms of assembly, part of the 30S ribosomal subunit.

Its function is as follows. One of the primary rRNA binding proteins, it binds specifically to the 5'-end of 16S ribosomal RNA. The chain is Small ribosomal subunit protein uS17 from Bordetella petrii (strain ATCC BAA-461 / DSM 12804 / CCUG 43448).